Here is a 900-residue protein sequence, read N- to C-terminus: DNA mismatch repair protein MutS (900 aa).

Residue 637-644 participates in ATP binding; the sequence is GPNMAGKS.

This sequence belongs to the DNA mismatch repair MutS family.

This protein is involved in the repair of mismatches in DNA. It is possible that it carries out the mismatch recognition step. This protein has a weak ATPase activity. This chain is DNA mismatch repair protein MutS, found in Methanosarcina mazei (strain ATCC BAA-159 / DSM 3647 / Goe1 / Go1 / JCM 11833 / OCM 88) (Methanosarcina frisia).